We begin with the raw amino-acid sequence, 666 residues long: Probable potassium transport system protein Kup (666 aa).

The next 12 membrane-spanning stretches (helical) occupy residues 16–36, 58–78, 100–120, 141–161, 165–185, 221–241, 253–273, 294–314, 343–363, 373–393, 399–419, and 424–444; these read GFIIALGIVYGDIGTSPLYTI, ISLIIWTLTLITTIKYVLIAL, PWLIIPAMIGGATLLSDGALT, IYQNQTNVIITTLVILIVLFG, FGTGFIGKIFGPVMFIWFSFL, IFILGSIFLATTGAEALYSDL, WPFVKMCIVLSYCGQAAWILA, VYLVSLATLAAIIASQALISG, LYIPVINWILFAVTSCTVLAF, YGLAITITMLMTTILLKYYLI, PILAHLVMAFFALVEFIFFLA, and FMHGGYAVVILALAIVFVMFI.

Belongs to the HAK/KUP transporter (TC 2.A.72) family.

It is found in the cell membrane. It carries out the reaction K(+)(in) + H(+)(in) = K(+)(out) + H(+)(out). Functionally, transport of potassium into the cell. Likely operates as a K(+):H(+) symporter. This Streptococcus pyogenes serotype M1 protein is Probable potassium transport system protein Kup.